A 341-amino-acid polypeptide reads, in one-letter code: MIDQSKLIERWKTTFETAQNPTELLAFKNSFRNADLKPLLSQIKETTDIETKRHLGQLYKQLESTLQTLHDTQLQVFTQAQSSSVLTHGDVMLLATSFAPGSSNIIYQVIDELVNYFKKFLFTVNYDSELTTIADCFDLLNIPKDHPSRNLTDTFYLDKNRLLRTHCTAATLRAVKETKKSNNPDIRIASFGAVFRKDDDDATHSHQFNQLDFMWIKKDFSLTNLKWFMQNMINHIFGENTSARFRLSHFPFTEPSFEIDIRCWLCQNGCGVCKKTRWIEVLGAGILHPQVMANMGFSDTDNIRGIAAGIGIERLVMLKHGISDIRDLYDNNFKFLAQFTD.

Position 254 (E254) interacts with Mg(2+).

The protein belongs to the class-II aminoacyl-tRNA synthetase family. Phe-tRNA synthetase alpha subunit type 1 subfamily. Tetramer of two alpha and two beta subunits. It depends on Mg(2+) as a cofactor.

Its subcellular location is the cytoplasm. The enzyme catalyses tRNA(Phe) + L-phenylalanine + ATP = L-phenylalanyl-tRNA(Phe) + AMP + diphosphate + H(+). This is Phenylalanine--tRNA ligase alpha subunit (pheS) from Mycoplasma pneumoniae (strain ATCC 29342 / M129 / Subtype 1) (Mycoplasmoides pneumoniae).